We begin with the raw amino-acid sequence, 192 residues long: Phosphoheptose isomerase (192 aa).

The region spanning 37-192 (LADSFKAGGK…IQLIEKEMVK (156 aa)) is the SIS domain. A substrate-binding site is contributed by 52–54 (NGG). Residues His61 and Glu65 each contribute to the Zn(2+) site. Residues Glu65, 93–94 (ND), 119–121 (STS), Ser124, and Gln172 each bind substrate. Zn(2+) is bound by residues Gln172 and His180.

Belongs to the SIS family. GmhA subfamily. Homotetramer. Requires Zn(2+) as cofactor.

It localises to the cytoplasm. It carries out the reaction 2 D-sedoheptulose 7-phosphate = D-glycero-alpha-D-manno-heptose 7-phosphate + D-glycero-beta-D-manno-heptose 7-phosphate. Its pathway is carbohydrate biosynthesis; D-glycero-D-manno-heptose 7-phosphate biosynthesis; D-glycero-alpha-D-manno-heptose 7-phosphate and D-glycero-beta-D-manno-heptose 7-phosphate from sedoheptulose 7-phosphate: step 1/1. In terms of biological role, catalyzes the isomerization of sedoheptulose 7-phosphate in D-glycero-D-manno-heptose 7-phosphate. This is Phosphoheptose isomerase from Shigella dysenteriae serotype 1 (strain Sd197).